A 54-amino-acid polypeptide reads, in one-letter code: Conotoxin vc5c (54 aa).

The N-terminal stretch at 1 to 14 (VILLLLIASIPSDA) is a signal peptide. Residues 15–43 (VQLKTKDDMPLASFHGNARRTLQMLSNKR) constitute a propeptide that is removed on maturation. 4-carboxyglutamate is present on glutamate 50. Tryptophan 51 carries the post-translational modification 6'-bromotryptophan.

The protein belongs to the conotoxin T superfamily. Contains 2 disulfide bonds that can be either 'C1-C3, C2-C4' or 'C1-C4, C2-C3', since these disulfide connectivities have been observed for conotoxins with cysteine framework V (for examples, see AC P0DQQ7 and AC P81755). As to expression, expressed by the venom duct.

The protein resides in the secreted. The protein is Conotoxin vc5c of Conus victoriae (Queen Victoria cone).